Reading from the N-terminus, the 828-residue chain is Periplasmic nitrate reductase (828 aa).

Positions 1–31 form a signal peptide, tat-type signal; that stretch reads MKLSRRSFMKANAVAAAAAAAGLSVPGVARA. In terms of domain architecture, 4Fe-4S Mo/W bis-MGD-type spans 39-95; that stretch reads IKWDKAPCRFCGTGCGVLVGTQQGRVVACQGDPDAPVNRGLNCIKGYFLPKIMYGKD. Positions 46, 49, 53, and 81 each coordinate [4Fe-4S] cluster. Mo-bis(molybdopterin guanine dinucleotide) is bound by residues Lys-83, Gln-150, Asn-175, Cys-179, 212–219, 243–247, 262–264, Met-372, Gln-376, Asn-482, 508–509, Lys-531, Asp-558, and 718–727; these read WGSNMAEM, STFQH, QSD, SD, and TGRVLEHWHT. Phe-794 lines the substrate pocket. Mo-bis(molybdopterin guanine dinucleotide) contacts are provided by Asn-802 and Lys-819.

It belongs to the prokaryotic molybdopterin-containing oxidoreductase family. NasA/NapA/NarB subfamily. In terms of assembly, component of the periplasmic nitrate reductase NapAB complex composed of NapA and NapB. It depends on [4Fe-4S] cluster as a cofactor. Requires Mo-bis(molybdopterin guanine dinucleotide) as cofactor. Post-translationally, predicted to be exported by the Tat system. The position of the signal peptide cleavage has not been experimentally proven.

It localises to the periplasm. The enzyme catalyses 2 Fe(II)-[cytochrome] + nitrate + 2 H(+) = 2 Fe(III)-[cytochrome] + nitrite + H2O. Catalytic subunit of the periplasmic nitrate reductase complex NapAB. Receives electrons from NapB and catalyzes the reduction of nitrate to nitrite. This chain is Periplasmic nitrate reductase, found in Salmonella dublin (strain CT_02021853).